Here is a 410-residue protein sequence, read N- to C-terminus: Pyrophosphate--fructose 6-phosphate 1-phosphotransferase (410 aa).

Residue G12 coordinates diphosphate. D121 contributes to the Mg(2+) binding site. Substrate-binding positions include 149-151 (TID), 194-196 (MGR), E266, and 323-326 (YFSR). Residue D151 is the Proton acceptor of the active site.

It belongs to the phosphofructokinase type A (PFKA) family. PPi-dependent PFK group II subfamily. Clade 'P' sub-subfamily. Homodimer or homotetramer. The cofactor is Mg(2+).

Its subcellular location is the cytoplasm. It carries out the reaction beta-D-fructose 6-phosphate + diphosphate = beta-D-fructose 1,6-bisphosphate + phosphate + H(+). It participates in carbohydrate degradation; glycolysis; D-glyceraldehyde 3-phosphate and glycerone phosphate from D-glucose: step 3/4. Its activity is regulated as follows. Non-allosteric. Its function is as follows. Catalyzes the phosphorylation of D-fructose 6-phosphate, the first committing step of glycolysis. Uses inorganic phosphate (PPi) as phosphoryl donor instead of ATP like common ATP-dependent phosphofructokinases (ATP-PFKs), which renders the reaction reversible, and can thus function both in glycolysis and gluconeogenesis. Consistently, PPi-PFK can replace the enzymes of both the forward (ATP-PFK) and reverse (fructose-bisphosphatase (FBPase)) reactions. This Mastigamoeba balamuthi (Phreatamoeba balamuthi) protein is Pyrophosphate--fructose 6-phosphate 1-phosphotransferase.